The following is a 149-amino-acid chain: 3-dehydroquinate dehydratase (149 aa).

Y26 serves as the catalytic Proton acceptor. The substrate site is built by N77, H83, and D90. H103 functions as the Proton donor in the catalytic mechanism. Substrate is bound by residues 104-105 (LS) and R114.

Belongs to the type-II 3-dehydroquinase family. As to quaternary structure, homododecamer.

It catalyses the reaction 3-dehydroquinate = 3-dehydroshikimate + H2O. It functions in the pathway metabolic intermediate biosynthesis; chorismate biosynthesis; chorismate from D-erythrose 4-phosphate and phosphoenolpyruvate: step 3/7. Its function is as follows. Catalyzes a trans-dehydration via an enolate intermediate. This is 3-dehydroquinate dehydratase from Haemophilus influenzae (strain PittGG).